A 744-amino-acid polypeptide reads, in one-letter code: Cullin-1 (744 aa).

The 63-residue stretch at 674–736 (DRRYAIDASI…RDYLERDKDN (63 aa)) folds into the Cullin neddylation domain.

Belongs to the cullin family. Part of a SCF (SKP1-CUL1-F-box protein) E3 ubiquitin-protein ligase complex. Is able to form the SCF complex together with SKP1 and the rice black streaked dwarf virus RBSDV protein P7-2. Interacts with D3. Neddylated (rubylated). Deneddylation occurs upon interaction with the COP9 signalosome (CSN) complex. Expressed in dry seeds and coleoptiles.

Involved in ubiquitination and subsequent proteasomal degradation of target proteins. This is Cullin-1 from Oryza sativa subsp. japonica (Rice).